Reading from the N-terminus, the 276-residue chain is Molybdenum storage protein subunit alpha (276 aa).

In terms of assembly, octamer consisting of 4 alpha and 4 beta chains.

Its subcellular location is the cytoplasm. In terms of biological role, intracellular storage of molybdenum. Binds polyoxomolybdates. Can bind at least 90 molybdenum atoms per protein molecule. In Azotobacter vinelandii (strain DJ / ATCC BAA-1303), this protein is Molybdenum storage protein subunit alpha.